A 94-amino-acid chain; its full sequence is DNA-directed RNA polymerase subunit omega (94 aa).

This sequence belongs to the RNA polymerase subunit omega family. The RNAP catalytic core consists of 2 alpha, 1 beta, 1 beta' and 1 omega subunit. When a sigma factor is associated with the core the holoenzyme is formed, which can initiate transcription.

The catalysed reaction is RNA(n) + a ribonucleoside 5'-triphosphate = RNA(n+1) + diphosphate. Functionally, promotes RNA polymerase assembly. Latches the N- and C-terminal regions of the beta' subunit thereby facilitating its interaction with the beta and alpha subunits. This chain is DNA-directed RNA polymerase subunit omega, found in Tolumonas auensis (strain DSM 9187 / NBRC 110442 / TA 4).